The primary structure comprises 663 residues: UvrABC system protein B (663 aa).

Over residues 1 to 10 the composition is skewed to basic and acidic residues; sequence MIDKRDDKPF. Residues 1 to 23 are disordered; that stretch reads MIDKRDDKPFKLKSKYKPSGDQP. In terms of domain architecture, Helicase ATP-binding spans 31-418; it reads DNIEGGEKAQ…TNTIIEQIIR (388 aa). 44-51 is a binding site for ATP; the sequence is GATGTGKT. The Beta-hairpin signature appears at 97-120; that stretch reads YYDYYQPEAYVPSSDTYIEKDSSV. Positions 435 to 601 constitute a Helicase C-terminal domain; sequence QMDDLLGEIN…TIKKDIRGLI (167 aa). In terms of domain architecture, UVR spans 627 to 662; it reads KEAINALQKQMQEAAELLDFELAAQMRDLILELKLM.

It belongs to the UvrB family. Forms a heterotetramer with UvrA during the search for lesions. Interacts with UvrC in an incision complex.

It localises to the cytoplasm. In terms of biological role, the UvrABC repair system catalyzes the recognition and processing of DNA lesions. A damage recognition complex composed of 2 UvrA and 2 UvrB subunits scans DNA for abnormalities. Upon binding of the UvrA(2)B(2) complex to a putative damaged site, the DNA wraps around one UvrB monomer. DNA wrap is dependent on ATP binding by UvrB and probably causes local melting of the DNA helix, facilitating insertion of UvrB beta-hairpin between the DNA strands. Then UvrB probes one DNA strand for the presence of a lesion. If a lesion is found the UvrA subunits dissociate and the UvrB-DNA preincision complex is formed. This complex is subsequently bound by UvrC and the second UvrB is released. If no lesion is found, the DNA wraps around the other UvrB subunit that will check the other stand for damage. This chain is UvrABC system protein B, found in Streptococcus pyogenes serotype M1.